Consider the following 59-residue polypeptide: Large ribosomal subunit protein uL30 (59 aa).

Belongs to the universal ribosomal protein uL30 family. Part of the 50S ribosomal subunit.

This Pelotomaculum thermopropionicum (strain DSM 13744 / JCM 10971 / SI) protein is Large ribosomal subunit protein uL30.